A 68-amino-acid chain; its full sequence is Cell division protein ZapB (68 aa).

A coiled-coil region spans residues 3–58; sequence LELLSKLETKIQAALETIELLKMELEEEKQKNHTLNEQNQQLSQDLTSWNEKVTGL.

The protein belongs to the ZapB family. Homodimer. The ends of the coiled-coil dimer bind to each other, forming polymers. Interacts with FtsZ.

It is found in the cytoplasm. Functionally, non-essential, abundant cell division factor that is required for proper Z-ring formation. It is recruited early to the divisome by direct interaction with FtsZ, stimulating Z-ring assembly and thereby promoting cell division earlier in the cell cycle. Its recruitment to the Z-ring requires functional FtsA or ZipA. The polypeptide is Cell division protein ZapB (Shewanella loihica (strain ATCC BAA-1088 / PV-4)).